The following is a 296-amino-acid chain: 4-diphosphocytidyl-2-C-methyl-D-erythritol kinase (296 aa).

The active site involves Lys-11. Residue 96 to 106 (PVSSGLAGGSA) coordinates ATP. The active site involves Asp-136.

Belongs to the GHMP kinase family. IspE subfamily.

The catalysed reaction is 4-CDP-2-C-methyl-D-erythritol + ATP = 4-CDP-2-C-methyl-D-erythritol 2-phosphate + ADP + H(+). It functions in the pathway isoprenoid biosynthesis; isopentenyl diphosphate biosynthesis via DXP pathway; isopentenyl diphosphate from 1-deoxy-D-xylulose 5-phosphate: step 3/6. In terms of biological role, catalyzes the phosphorylation of the position 2 hydroxy group of 4-diphosphocytidyl-2C-methyl-D-erythritol. The sequence is that of 4-diphosphocytidyl-2-C-methyl-D-erythritol kinase from Anaplasma phagocytophilum (strain HZ).